A 1170-amino-acid polypeptide reads, in one-letter code: Putative DNA topoisomerase 2, mitochondrial (1170 aa).

ATP-binding positions include asparagine 106, asparagine 135, 163–165 (SSN), 176–183 (GRNGYGAK), and 396–398 (QTK). A Toprim domain is found at 475–590 (CTLILTEGDS…SLVHTDGFIQ (116 aa)). Positions 481, 559, and 561 each coordinate Mg(2+). Positions 722 to 1157 (IPSLIDGLKP…DWKSVWRSEL (436 aa)) constitute a Topo IIA-type catalytic domain. Residue tyrosine 813 is the O-(5'-phospho-DNA)-tyrosine intermediate of the active site.

It belongs to the type II topoisomerase family. In terms of assembly, homodimer. It depends on Mg(2+) as a cofactor. Mn(2+) serves as cofactor. Requires Ca(2+) as cofactor.

The protein resides in the mitochondrion. The enzyme catalyses ATP-dependent breakage, passage and rejoining of double-stranded DNA.. Control of topological states of DNA by transient breakage and subsequent rejoining of DNA strands. Topoisomerase II makes double-strand breaks. This Caenorhabditis elegans protein is Putative DNA topoisomerase 2, mitochondrial.